We begin with the raw amino-acid sequence, 87 residues long: Small ribosomal subunit protein bS20 (87 aa).

Positions 1–21 (MANHKSAEKRARQTIKKTERN) are disordered.

Belongs to the bacterial ribosomal protein bS20 family.

Binds directly to 16S ribosomal RNA. The sequence is that of Small ribosomal subunit protein bS20 from Campylobacter jejuni subsp. jejuni serotype O:23/36 (strain 81-176).